Reading from the N-terminus, the 113-residue chain is Ribulose bisphosphate carboxylase small subunit (113 aa).

This sequence belongs to the RuBisCO small chain family. In terms of assembly, heterohexadecamer of 8 large and 8 small subunits. RuBisCO interacts with the C-terminus of CcmM, and can be found in complexes that also include carbonic anhydrase (ccaA).

It localises to the carboxysome. In terms of biological role, ruBisCO catalyzes two reactions: the carboxylation of D-ribulose 1,5-bisphosphate, the primary event in carbon dioxide fixation, as well as the oxidative fragmentation of the pentose substrate in the photorespiration process. Both reactions occur simultaneously and in competition at the same active site. Although the small subunit is not catalytic it is essential for maximal activity. This Synechocystis sp. (strain ATCC 27184 / PCC 6803 / Kazusa) protein is Ribulose bisphosphate carboxylase small subunit.